The following is a 202-amino-acid chain: Large ribosomal subunit protein uL18 (202 aa).

This sequence belongs to the universal ribosomal protein uL18 family. As to quaternary structure, part of the 50S ribosomal subunit. Contacts the 5S and 23S rRNAs.

This is one of the proteins that bind and probably mediate the attachment of the 5S RNA into the large ribosomal subunit, where it forms part of the central protuberance. In Methanopyrus kandleri (strain AV19 / DSM 6324 / JCM 9639 / NBRC 100938), this protein is Large ribosomal subunit protein uL18.